The sequence spans 335 residues: Dolichyl-diphosphooligosaccharide--protein glycosyltransferase subunit MAGT1 (335 aa).

An N-terminal signal peptide occupies residues 1–29 (MASPRWLWCVCATAAVTLLLVSKVPSASA). The Extracellular segment spans residues 30 to 184 (QRKKEKVLVE…DVNIRVIRPP (155 aa)). Residues 47–175 (WTNQRPVIRM…IARWIADRTD (129 aa)) form the Thioredoxin domain. N-linked (GlcNAc...) asparagine glycosylation is present at asparagine 71. Cysteine 87 and cysteine 90 are oxidised to a cystine. The helical transmembrane segment at 185–205 (NYAGPLMLGLLLAVIGGLVYL) threads the bilayer. At 206-209 (RRSN) the chain is on the cytoplasmic side. Residues 210 to 230 (MEFLFNKTGWAFAALCFVLAM) form a helical membrane-spanning segment. Topologically, residues 231–270 (TSGQMWNHIRGPPYAHKNPHTGHVNYIHGSSQAQFVAETH) are extracellular. The chain crosses the membrane as a helical span at residues 271-291 (IVLLFNGGVTLGMVLLCEAAA). Residues 292 to 300 (SDMDIGKRR) are Cytoplasmic-facing. The chain crosses the membrane as a helical span at residues 301 to 321 (MMCIAGIGLVVLFFSWMLSIF). Residues 322–335 (RSKYHGYPYSFLMS) are Extracellular-facing.

This sequence belongs to the OST3/OST6 family. In terms of assembly, accessory component of the STT3B-containing form of the oligosaccharyltransferase (OST) complex. OST exists in two different complex forms which contain common core subunits RPN1, RPN2, OST48, OST4, DAD1 and TMEM258, either STT3A or STT3B as catalytic subunits, and form-specific accessory subunits. OST can form stable complexes with the Sec61 complex or with both the Sec61 and TRAP complexes. The association of TUSC3 or MAGT1 with the STT3B-containing complex seems to be mutually exclusvice.

Its subcellular location is the cell membrane. The protein resides in the endoplasmic reticulum. It localises to the endoplasmic reticulum membrane. It participates in protein modification; protein glycosylation. Its function is as follows. Accessory component of the STT3B-containing form of the N-oligosaccharyl transferase (OST) complex which catalyzes the transfer of a high mannose oligosaccharide from a lipid-linked oligosaccharide donor to an asparagine residue within an Asn-X-Ser/Thr consensus motif in nascent polypeptide chains. Involved in N-glycosylation of STT3B-dependent substrates. Specifically required for the glycosylation of a subset of acceptor sites that are near cysteine residues; in this function seems to act redundantly with TUSC3. In its oxidized form proposed to form transient mixed disulfides with a glycoprotein substrate to facilitate access of STT3B to the unmodified acceptor site. Also has oxidoreductase-independent functions in the STT3B-containing OST complex possibly involving substrate recognition. Could indirectly play a role in Mg(2+) transport in epithelial cells. The chain is Dolichyl-diphosphooligosaccharide--protein glycosyltransferase subunit MAGT1 from Rattus norvegicus (Rat).